Here is a 332-residue protein sequence, read N- to C-terminus: UPF0158 protein TC_0713 (332 aa).

Disordered stretches follow at residues 196 to 215 (ALNPRPKRGRPPKQSAKVEA) and 291 to 332 (LGYD…KARS). Residues 295–316 (GDGDASDFFGEEYDDDDDDDDD) are compositionally biased toward acidic residues. Basic residues predominate over residues 320–332 (KKAAKRGRKKARS).

This sequence belongs to the UPF0158 family.

The protein is UPF0158 protein TC_0713 of Chlamydia muridarum (strain MoPn / Nigg).